The chain runs to 935 residues: C-1-tetrahydrofolate synthase, cytoplasmic (935 aa).

At Met-1 the chain carries N-acetylmethionine. A methylenetetrahydrofolate dehydrogenase and methenyltetrahydrofolate cyclohydrolase (D/C) domain region spans residues 2–291 (APAGILNGKV…MLMQSTVESA (290 aa)). Substrate contacts are provided by residues 52–56 (YINVK) and 99–101 (VQL). The active site involves Lys-56. Residues 172–174 (GRS) and Ser-197 contribute to the NADP(+) site. 272–276 (PGGVG) serves as a coordination point for substrate. A formyltetrahydrofolate synthetase domain region spans residues 310-935 (LNLKTPVPSD…PETEQVNGLF (626 aa)). At Ser-318 the chain carries Phosphoserine. 380–387 (TPLGEGKS) is a binding site for ATP. 2 positions are modified to phosphoserine: Ser-413 and Ser-490.

In the N-terminal section; belongs to the tetrahydrofolate dehydrogenase/cyclohydrolase family. This sequence in the C-terminal section; belongs to the formate--tetrahydrofolate ligase family. Homodimer.

The protein resides in the cytoplasm. It carries out the reaction (6R)-5,10-methylene-5,6,7,8-tetrahydrofolate + NADP(+) = (6R)-5,10-methenyltetrahydrofolate + NADPH. The catalysed reaction is (6R)-5,10-methenyltetrahydrofolate + H2O = (6R)-10-formyltetrahydrofolate + H(+). It catalyses the reaction (6S)-5,6,7,8-tetrahydrofolate + formate + ATP = (6R)-10-formyltetrahydrofolate + ADP + phosphate. It functions in the pathway one-carbon metabolism; tetrahydrofolate interconversion. Its function is as follows. Trifunctional enzyme that catalyzes the interconversion of three forms of one-carbon-substituted tetrahydrofolate: (6R)-5,10-methylene-5,6,7,8-tetrahydrofolate, 5,10-methenyltetrahydrofolate and (6S)-10-formyltetrahydrofolate. These derivatives of tetrahydrofolate are differentially required in nucleotide and amino acid biosynthesis, (6S)-10-formyltetrahydrofolate being required for purine biosynthesis while (6R)-5,10-methylene-5,6,7,8-tetrahydrofolate is used for serine and methionine biosynthesis for instance. This is C-1-tetrahydrofolate synthase, cytoplasmic (Mthfd1) from Rattus norvegicus (Rat).